Here is a 120-residue protein sequence, read N- to C-terminus: NAD(P)H-quinone oxidoreductase subunit 3, chloroplastic (120 aa).

A run of 3 helical transmembrane segments spans residues 10 to 30 (FWAFLLIASLVPVLAVGTSSL), 64 to 84 (MFALVFVVFDVETVFLYPWAM), and 89 to 109 (LGVLAFIEALVFVLVLIIGLV).

The protein belongs to the complex I subunit 3 family. As to quaternary structure, NDH is composed of at least 16 different subunits, 5 of which are encoded in the nucleus.

The protein resides in the plastid. The protein localises to the chloroplast thylakoid membrane. It catalyses the reaction a plastoquinone + NADH + (n+1) H(+)(in) = a plastoquinol + NAD(+) + n H(+)(out). It carries out the reaction a plastoquinone + NADPH + (n+1) H(+)(in) = a plastoquinol + NADP(+) + n H(+)(out). Its function is as follows. NDH shuttles electrons from NAD(P)H:plastoquinone, via FMN and iron-sulfur (Fe-S) centers, to quinones in the photosynthetic chain and possibly in a chloroplast respiratory chain. The immediate electron acceptor for the enzyme in this species is believed to be plastoquinone. Couples the redox reaction to proton translocation, and thus conserves the redox energy in a proton gradient. In Zygnema circumcarinatum (Green alga), this protein is NAD(P)H-quinone oxidoreductase subunit 3, chloroplastic.